Consider the following 311-residue polypeptide: Pyrimidine-specific ribonucleoside hydrolase RihA (311 aa).

His240 is an active-site residue.

The protein belongs to the IUNH family. RihA subfamily.

Hydrolyzes cytidine or uridine to ribose and cytosine or uracil, respectively. In Shigella boydii serotype 4 (strain Sb227), this protein is Pyrimidine-specific ribonucleoside hydrolase RihA.